A 178-amino-acid chain; its full sequence is Interleukin-10 (178 aa).

Residues 1-18 (MHSSALLCCLVLLTGVRA) form the signal peptide. Disulfide bonds link Cys-30/Cys-126 and Cys-80/Cys-132. Asn-134 is a glycosylation site (N-linked (GlcNAc...) asparagine).

The protein belongs to the IL-10 family. As to quaternary structure, homodimer. Interacts with IL10RA and IL10RB. Produced by a variety of cell lines, including T-cells, macrophages, mast cells and other cell types.

It is found in the secreted. Functionally, major immune regulatory cytokine that acts on many cells of the immune system where it has profound anti-inflammatory functions, limiting excessive tissue disruption caused by inflammation. Mechanistically, IL10 binds to its heterotetrameric receptor comprising IL10RA and IL10RB leading to JAK1 and STAT2-mediated phosphorylation of STAT3. In turn, STAT3 translocates to the nucleus where it drives expression of anti-inflammatory mediators. Targets antigen-presenting cells (APCs) such as macrophages and monocytes and inhibits their release of pro-inflammatory cytokines including granulocyte-macrophage colony-stimulating factor /GM-CSF, granulocyte colony-stimulating factor/G-CSF, IL-1 alpha, IL-1 beta, IL-6, IL-8 and TNF-alpha. Also interferes with antigen presentation by reducing the expression of MHC-class II and co-stimulatory molecules, thereby inhibiting their ability to induce T cell activation. In addition, controls the inflammatory response of macrophages by reprogramming essential metabolic pathways including mTOR signaling. In Homo sapiens (Human), this protein is Interleukin-10 (IL10).